A 1020-amino-acid polypeptide reads, in one-letter code: Calcium-transporting ATPase 1 (1020 aa).

Residue Met-1 is modified to N-acetylmethionine. Residues 1–162 (MESYLNENFG…NQFTESPSRG (162 aa)) are Stromal-facing. Residues 21–32 (ALQRWRKLCWIV) are interaction with calmodulin. Ser-46 is subject to Phosphoserine; by CPK. The chain crosses the membrane as a helical span at residues 163 to 183 (FWLFVWEALQDTTLMILAACA). At 184 to 201 (FVSLIVGILMEGWPIGAH) the chain is on the lumenal side. The helical transmembrane segment at 202 to 222 (DGLGIVASILLVVFVTATSDY) threads the bilayer. Residues 223–350 (RQSLQFKDLD…DDETPLQVKL (128 aa)) are Stromal-facing. Residues 351 to 370 (NGVATIIGKIGLFFAVITFA) traverse the membrane as a helical segment. Residues 371-400 (VLVQGLANQKRLDNSHWIWTADELMAMLEY) lie on the Lumenal side of the membrane. Residues 401 to 418 (FAVAVTIVVVAVPEGLPL) traverse the membrane as a helical segment. The Stromal portion of the chain corresponds to 419–813 (AVTLSLAFAM…KWGRSVYINI (395 aa)). Asp-456 acts as the 4-aspartylphosphate intermediate in catalysis. Mg(2+) contacts are provided by Asp-758 and Asp-762. A helical membrane pass occupies residues 814 to 832 (QKFVQFQLTVNVVALIVNF). At 833–843 (LSACLTGNAPL) the chain is on the lumenal side. Residues 844-864 (TAVQLLWVNMIMDTLGALALA) traverse the membrane as a helical segment. Residues 865-884 (TEPPQDDLMKRSPVGRKGNF) lie on the Stromal side of the membrane. A helical transmembrane segment spans residues 885–907 (ISNVMWRNILGQSLYQLVIIWCL). The Lumenal portion of the chain corresponds to 908 to 919 (QTKGKTMFGLDG). A helical membrane pass occupies residues 920–941 (PDSDLTLNTLIFNIFVFCQVFN). Residues 942 to 959 (EISSREMEKIDVFKGILK) are Stromal-facing. A helical transmembrane segment spans residues 960–981 (NYVFVAVLTCTVVFQVIIIELL). Residues 982 to 991 (GTFADTTPLN) are Lumenal-facing. A helical transmembrane segment spans residues 992-1013 (LGQWLVSIILGFLGMPVAAALK). At 1014–1020 (MIPVGSH) the chain is on the stromal side.

This sequence belongs to the cation transport ATPase (P-type) (TC 3.A.3) family. Type IIB subfamily. As to expression, expressed at higher levels in roots than in leaves.

The protein localises to the plastid. It localises to the chloroplast inner membrane. The enzyme catalyses Ca(2+)(in) + ATP + H2O = Ca(2+)(out) + ADP + phosphate + H(+). Its activity is regulated as follows. Activated by calmodulin. This magnesium-dependent enzyme catalyzes the hydrolysis of ATP coupled with the translocation of calcium from the cytosol out of the cell or into organelles. This Arabidopsis thaliana (Mouse-ear cress) protein is Calcium-transporting ATPase 1 (ACA1).